A 299-amino-acid polypeptide reads, in one-letter code: Lipoyl synthase (299 aa).

[4Fe-4S] cluster-binding residues include cysteine 34, cysteine 39, cysteine 45, cysteine 60, cysteine 64, cysteine 67, and serine 273. The 217-residue stretch at 46–262 (WNKKHATVMI…KYVAYSKGFL (217 aa)) folds into the Radical SAM core domain.

It belongs to the radical SAM superfamily. Lipoyl synthase family. Requires [4Fe-4S] cluster as cofactor.

Its subcellular location is the cytoplasm. The enzyme catalyses [[Fe-S] cluster scaffold protein carrying a second [4Fe-4S](2+) cluster] + N(6)-octanoyl-L-lysyl-[protein] + 2 oxidized [2Fe-2S]-[ferredoxin] + 2 S-adenosyl-L-methionine + 4 H(+) = [[Fe-S] cluster scaffold protein] + N(6)-[(R)-dihydrolipoyl]-L-lysyl-[protein] + 4 Fe(3+) + 2 hydrogen sulfide + 2 5'-deoxyadenosine + 2 L-methionine + 2 reduced [2Fe-2S]-[ferredoxin]. It functions in the pathway protein modification; protein lipoylation via endogenous pathway; protein N(6)-(lipoyl)lysine from octanoyl-[acyl-carrier-protein]: step 2/2. Functionally, catalyzes the radical-mediated insertion of two sulfur atoms into the C-6 and C-8 positions of the octanoyl moiety bound to the lipoyl domains of lipoate-dependent enzymes, thereby converting the octanoylated domains into lipoylated derivatives. The protein is Lipoyl synthase of Ehrlichia canis (strain Jake).